The following is a 480-amino-acid chain: Adenylosuccinate lyase (480 aa).

The AMP site is built by Arg14, Tyr15, Arg79, His80, and Asp81. Position 80 (His80) interacts with fumarate. Residue His153 is the Proton donor/acceptor of the active site. An AMP-binding site is contributed by Gln236. Fumarate is bound at residue Gln236. Gln236 is a binding site for N(6)-(1,2-dicarboxyethyl)-AMP. The active-site Proton donor/acceptor is Ser284. Residues Ser285, Lys290, and Asn292 each coordinate fumarate. N(6)-(1,2-dicarboxyethyl)-AMP is bound by residues Ser285, Lys290, and Asn292. Arg298 is an AMP binding site. N(6)-(1,2-dicarboxyethyl)-AMP contacts are provided by Arg324, Ser329, and Arg333. Positions 329 and 333 each coordinate AMP.

The protein belongs to the lyase 1 family. Adenylosuccinate lyase subfamily. In terms of assembly, homotetramer.

It catalyses the reaction N(6)-(1,2-dicarboxyethyl)-AMP = fumarate + AMP. It functions in the pathway purine metabolism; AMP biosynthesis via salvage pathway. Catalyzes conversion of succinyladenosine monophosphate (SAMP) to AMP and fumarate on the purine salvage pathway. This chain is Adenylosuccinate lyase, found in Schistosoma mansoni (Blood fluke).